The sequence spans 239 residues: Uridylate kinase (239 aa).

An ATP-binding site is contributed by 13-16; sequence KISG. UMP is bound at residue Gly-55. ATP contacts are provided by Gly-56 and Arg-60. UMP contacts are provided by residues Asp-75 and 136–143; that span reads LGIPFFTT. Positions 163, 169, and 172 each coordinate ATP.

The protein belongs to the UMP kinase family. In terms of assembly, homohexamer.

It is found in the cytoplasm. It catalyses the reaction UMP + ATP = UDP + ADP. It participates in pyrimidine metabolism; CTP biosynthesis via de novo pathway; UDP from UMP (UMPK route): step 1/1. Inhibited by UTP. In terms of biological role, catalyzes the reversible phosphorylation of UMP to UDP. The sequence is that of Uridylate kinase from Buchnera aphidicola subsp. Cinara cedri (strain Cc).